A 623-amino-acid chain; its full sequence is Chaperone protein DnaK (623 aa).

The span at Q582–S603 shows a compositional bias: low complexity. The segment at Q582 to K623 is disordered. The segment covering A614 to K623 has biased composition (acidic residues).

It belongs to the heat shock protein 70 family.

Acts as a chaperone. The sequence is that of Chaperone protein DnaK from Methanocella arvoryzae (strain DSM 22066 / NBRC 105507 / MRE50).